The sequence spans 490 residues: Cytochrome P450 monooxygenase aclL (490 aa).

Residues 1–21 traverse the membrane as a helical segment; the sequence is MLFSLGPLTIVYGLVIFVVAK. Asn176 carries an N-linked (GlcNAc...) asparagine glycan. Cys434 provides a ligand contact to heme.

The protein belongs to the cytochrome P450 family. Requires heme as cofactor.

It is found in the membrane. It participates in mycotoxin biosynthesis. Cytochrome P450 monooxygenase; part of the gene cluster that mediates the biosynthesis of aspirochlorine (or antibiotic A30641), an unusual halogenated spiro compound with distinctive antifungal properties due to selective inhibition of protein biosynthesis, and which is also active against bacteria, viruses, and murine tumor cells. The non-ribosomal peptide synthetase (NRPS) aclP is responsible the formation of the diketopiperazine (DKP) core from the condensation of 2 phenylalanine residues. One Phe residue is tailored into chlorotyrosine by hydroxylation and chlorination, whereas the second Phe undergoes an unprecedented C-C bond cleavage to be converted into glycine. After formation of the DKP, sulfur is incorporated into the DKP by conjugation with glutathione by aclG, followed by its stepwise degradation to the thiol by aclI, aclJ and aclK, and the dithiol oxidation by aclT. In addition, oxygenases (aclB, aclC, aclL and aclO) and O-methyltransferases (aclM and aclU) act as tailoring enzymes to produce the intermediate dechloroaspirochlorine. Ultimately, chlorination of dechloroaspirochlorine by the halogenase aclH is the last step in the aspirochlorine pathway. This Aspergillus oryzae (strain ATCC 42149 / RIB 40) (Yellow koji mold) protein is Cytochrome P450 monooxygenase aclL.